Here is a 655-residue protein sequence, read N- to C-terminus: p-hydroxybenzoic acid efflux pump subunit AaeB (655 aa).

The next 11 helical transmembrane spans lie at 13 to 33 (FAVK…HFQL), 38 to 58 (WAVL…GGEP), 69 to 89 (LRII…IAMI), 93 to 113 (LLMI…SSLV), 121 to 141 (WGLA…EPLL), 152 to 172 (EIVI…PRSI), 370 to 390 (LFWL…IAVV), 407 to 427 (FIYG…VIIP), 431 to 451 (QSML…GIEV), 459 to 479 (MGAL…TFHF), and 482 to 502 (FLDS…VILL).

This sequence belongs to the aromatic acid exporter ArAE (TC 2.A.85) family.

Its subcellular location is the cell inner membrane. Its function is as follows. Forms an efflux pump with AaeA. Could function as a metabolic relief valve, allowing to eliminate certain compounds when they accumulate to high levels in the cell. This is p-hydroxybenzoic acid efflux pump subunit AaeB from Escherichia coli (strain SMS-3-5 / SECEC).